The sequence spans 496 residues: MTAQTAEEHSLTAVIGLEVHVQLETDTKIFCGCSTDADDNEEPNTRTCPVCLGLPGALPVLNEGAVEAAVKVGKALSSDIPEETRFHRKNYYYPDLPKNFQITQYDAPICDGGELEFAVDDERRTVAIERAHLEEDPGSLSHAGGSIDTAEHTLVDYNRAGTPLLEIVTAPDFRSAAEVRAFLAKLTEVLEYLGVFDVTRDGSLRVDANLSIVDSDAVGENGSIDEATLEAANRTEVKNISSHKGAEKALAYEETRQKNAVQRGREVEQETRHWDESRGITVSMRSKEEEKDYRYFREADIPPLRVSDWKEKIDIPELPDARRERFREEYGLDAETASKLTSTKQVADFYERVADTFAPELAATWVADNLLGELNYRDMEITDIEGRLDEFAHLIELVDEDEITVKNAEEVVLRRMLDDGQPPGDIVEAEDLGKTDDDAVAAAVTAAIEENPDAVEDYHAGEDGALNFLVGQVMQETGGSADPGTVNELLRAELDG.

This sequence belongs to the GatB/GatE family. GatB subfamily. As to quaternary structure, heterotrimer of A, B and C subunits.

The catalysed reaction is L-glutamyl-tRNA(Gln) + L-glutamine + ATP + H2O = L-glutaminyl-tRNA(Gln) + L-glutamate + ADP + phosphate + H(+). It catalyses the reaction L-aspartyl-tRNA(Asn) + L-glutamine + ATP + H2O = L-asparaginyl-tRNA(Asn) + L-glutamate + ADP + phosphate + 2 H(+). Allows the formation of correctly charged Asn-tRNA(Asn) or Gln-tRNA(Gln) through the transamidation of misacylated Asp-tRNA(Asn) or Glu-tRNA(Gln) in organisms which lack either or both of asparaginyl-tRNA or glutaminyl-tRNA synthetases. The reaction takes place in the presence of glutamine and ATP through an activated phospho-Asp-tRNA(Asn) or phospho-Glu-tRNA(Gln). The polypeptide is Aspartyl/glutamyl-tRNA(Asn/Gln) amidotransferase subunit B (Natronomonas pharaonis (strain ATCC 35678 / DSM 2160 / CIP 103997 / JCM 8858 / NBRC 14720 / NCIMB 2260 / Gabara) (Halobacterium pharaonis)).